A 295-amino-acid polypeptide reads, in one-letter code: 3-methyl-2-oxobutanoate hydroxymethyltransferase (295 aa).

A disordered region spans residues 1 to 30 (MTSGRAMSPEETAPYGTGPARAESAPDAPA). Mg(2+) is bound by residues Asp76 and Asp115. Residues 76-77 (DS), Asp115, and Lys145 each bind 3-methyl-2-oxobutanoate. A Mg(2+)-binding site is contributed by Glu147. The active-site Proton acceptor is Glu213.

The protein belongs to the PanB family. As to quaternary structure, homodecamer; pentamer of dimers. Requires Mg(2+) as cofactor.

It localises to the cytoplasm. The catalysed reaction is 3-methyl-2-oxobutanoate + (6R)-5,10-methylene-5,6,7,8-tetrahydrofolate + H2O = 2-dehydropantoate + (6S)-5,6,7,8-tetrahydrofolate. Its pathway is cofactor biosynthesis; (R)-pantothenate biosynthesis; (R)-pantoate from 3-methyl-2-oxobutanoate: step 1/2. In terms of biological role, catalyzes the reversible reaction in which hydroxymethyl group from 5,10-methylenetetrahydrofolate is transferred onto alpha-ketoisovalerate to form ketopantoate. The chain is 3-methyl-2-oxobutanoate hydroxymethyltransferase from Nocardioides sp. (strain ATCC BAA-499 / JS614).